Reading from the N-terminus, the 100-residue chain is Urease subunit gamma (100 aa).

Belongs to the urease gamma subunit family. As to quaternary structure, heterotrimer of UreA (gamma), UreB (beta) and UreC (alpha) subunits. Three heterotrimers associate to form the active enzyme.

It is found in the cytoplasm. The catalysed reaction is urea + 2 H2O + H(+) = hydrogencarbonate + 2 NH4(+). It functions in the pathway nitrogen metabolism; urea degradation; CO(2) and NH(3) from urea (urease route): step 1/1. This is Urease subunit gamma from Parasynechococcus marenigrum (strain WH8102).